The chain runs to 89 residues: Small ribosomal subunit protein uS17 (89 aa).

Belongs to the universal ribosomal protein uS17 family. Part of the 30S ribosomal subunit.

Functionally, one of the primary rRNA binding proteins, it binds specifically to the 5'-end of 16S ribosomal RNA. The sequence is that of Small ribosomal subunit protein uS17 from Xylella fastidiosa (strain Temecula1 / ATCC 700964).